A 410-amino-acid polypeptide reads, in one-letter code: MVLSQRQRDELNRAIADYLRSNGYEEAYSVFKKEAELDMNEELDKKYAGLLEKKWTSVIRLQKKVMELESKLNEAKEEFTSGGPLGQKRDPKEWIPRPPEKYALSGHRSPVTRVIFHPVFSVMVSASEDATIKVWDYETGDFERTLKGHTDSVQDISFDHSGKLLASCSADMTIKLWDFQGFECIRTMHGHDHNVSSVAIMPNGDHIVSASRDKTIKMWEVQTGYCVKTFTGHREWVRMVRPNQDGTLIASCSNDQTVRVWVVATKECKAELREHEHVVECISWAPESSYSSISEATGSETKKSGKPGPFLLSGSRDKTIKMWDVSTGMCLMTLVGHDNWVRGVLFHSGGKFILSCADDKTLRVWDYKNKRCMKTLNAHEHFVTSLDFHKTAPYVVTGFVDQTVKVWECR.

The tract at residues 1-38 (MVLSQRQRDELNRAIADYLRSNGYEEAYSVFKKEAELD) is required for self-association and interaction with PAFAH1B2 and PAFAH1B3. Residues 1–66 (MVLSQRQRDE…SVIRLQKKVM (66 aa)) are interaction with NDE1. Positions 1–102 (MVLSQRQRDE…EWIPRPPEKY (102 aa)) are interaction with NDEL1. A LisH domain is found at 7–39 (QRDELNRAIADYLRSNGYEEAYSVFKKEAELDM). Position 53 is an N6-acetyllysine (lysine 53). Positions 56-82 (TSVIRLQKKVMELESKLNEAKEEFTSG) form a coiled coil. Residues 83–410 (GPLGQKRDPK…DQTVKVWECR (328 aa)) are interaction with dynein and dynactin. WD repeat units lie at residues 106 to 147 (GHRS…RTLK), 148 to 187 (GHTD…CIRT), 190 to 229 (GHDH…CVKT), 232 to 271 (GHRE…CKAE), 274 to 333 (EHEH…CLMT), 336 to 377 (GHDN…KTLN), and 379 to 410 (HEHF…WECR). Serine 109 carries the post-translational modification Phosphoserine. Residues 367–409 (YKNKRCMKTLNAHEHFVTSLDFHKTAPYVVTGFVDQTVKVWEC) are interaction with DCX. The segment at 388–410 (FHKTAPYVVTGFVDQTVKVWECR) is interaction with NDEL1.

Belongs to the WD repeat LIS1/nudF family. As to quaternary structure, can self-associate. Component of the cytosolic PAF-AH (I) heterotetrameric enzyme, which is composed of PAFAH1B1 (beta), PAFAH1B2 (alpha2) and PAFAH1B3 (alpha1) subunits. The catalytic activity of the enzyme resides in the alpha1 (PAFAH1B3) and alpha2 (PAFAH1B2) subunits, whereas the beta subunit (PAFAH1B1) has regulatory activity. Trimer formation is not essential for the catalytic activity. Interacts with the catalytic dimer of PAF-AH (I) heterotetrameric enzyme: interacts with PAFAH1B2 homodimer (alpha2/alpha2 homodimer), PAFAH1B3 homodimer (alpha1/alpha1 homodimer) and PAFAH1B2-PAFAH1B3 heterodimer (alpha2/alpha1 heterodimer). Interacts with DCX, dynein, dynactin, IQGAP1, KATNB1, NDE1, NDEL1, NUDC and RSN. Interacts with DISC1, and this interaction is enhanced by NDEL1. Interacts with DAB1 when DAB1 is phosphorylated in response to RELN/reelin signaling. Interacts with INTS13. Interacts with DCDC1.

The protein resides in the cytoplasm. It localises to the cytoskeleton. Its subcellular location is the microtubule organizing center. It is found in the centrosome. The protein localises to the spindle. The protein resides in the nucleus membrane. Its function is as follows. Regulatory subunit (beta subunit) of the cytosolic type I platelet-activating factor (PAF) acetylhydrolase (PAF-AH (I)), an enzyme that catalyzes the hydrolyze of the acetyl group at the sn-2 position of PAF and its analogs and participates in PAF inactivation. Regulates the PAF-AH (I) activity in a catalytic dimer composition-dependent manner. Positively regulates the activity of the minus-end directed microtubule motor protein dynein. May enhance dynein-mediated microtubule sliding by targeting dynein to the microtubule plus end. Required for several dynein- and microtubule-dependent processes such as the maintenance of Golgi integrity, the peripheral transport of microtubule fragments and the coupling of the nucleus and centrosome. Required during brain development for the proliferation of neuronal precursors and the migration of newly formed neurons from the ventricular/subventricular zone toward the cortical plate. Neuronal migration involves a process called nucleokinesis, whereby migrating cells extend an anterior process into which the nucleus subsequently translocates. During nucleokinesis dynein at the nuclear surface may translocate the nucleus towards the centrosome by exerting force on centrosomal microtubules. Also required for proper activation of Rho GTPases and actin polymerization at the leading edge of locomoting cerebellar neurons and postmigratory hippocampal neurons in response to calcium influx triggered via NMDA receptors. May also play a role in other forms of cell locomotion including the migration of fibroblasts during wound healing. Required for dynein recruitment to microtubule plus ends and BICD2-bound cargos. May modulate the Reelin pathway through interaction of the PAF-AH (I) catalytic dimer with VLDLR. The chain is Platelet-activating factor acetylhydrolase IB subunit alpha from Pan troglodytes (Chimpanzee).